Consider the following 229-residue polypeptide: ATP-dependent dethiobiotin synthetase BioD (229 aa).

12–17 (GVGKTV) is an ATP binding site. Position 16 (Thr-16) interacts with Mg(2+). Lys-37 is an active-site residue. Thr-41 provides a ligand contact to substrate. ATP-binding positions include Asp-53, 112-115 (EGAG), and 201-203 (PAG). Mg(2+) is bound by residues Asp-53 and Glu-112.

The protein belongs to the dethiobiotin synthetase family. As to quaternary structure, homodimer. Mg(2+) serves as cofactor.

It is found in the cytoplasm. It catalyses the reaction (7R,8S)-7,8-diammoniononanoate + CO2 + ATP = (4R,5S)-dethiobiotin + ADP + phosphate + 3 H(+). Its pathway is cofactor biosynthesis; biotin biosynthesis; biotin from 7,8-diaminononanoate: step 1/2. Catalyzes a mechanistically unusual reaction, the ATP-dependent insertion of CO2 between the N7 and N8 nitrogen atoms of 7,8-diaminopelargonic acid (DAPA, also called 7,8-diammoniononanoate) to form a ureido ring. The protein is ATP-dependent dethiobiotin synthetase BioD of Mycobacterium sp. (strain JLS).